Consider the following 129-residue polypeptide: Snaclec coagulation factor IX-binding protein subunit A (129 aa).

The region spanning 1 to 129 (DCPSGWSSYE…GQQNPFVCEA (129 aa)) is the C-type lectin domain. Cystine bridges form between Cys-2–Cys-13, Cys-30–Cys-127, and Cys-102–Cys-119. Residues Ser-41, Glu-43, and Glu-47 each contribute to the Ca(2+) site. A Ca(2+)-binding site is contributed by Glu-128.

Belongs to the snaclec family. Heterodimer of subunits A and B; disulfide-linked. In terms of tissue distribution, expressed by the venom gland.

The protein resides in the secreted. In terms of biological role, anticoagulant protein which binds to the gamma-carboxyglutamic acid-domain regions of factor IX (F9) (but not factor X) in the presence of calcium with a 1 to 1 stoichiometry. The sequence is that of Snaclec coagulation factor IX-binding protein subunit A from Protobothrops flavoviridis (Habu).